Here is a 240-residue protein sequence, read N- to C-terminus: Thiamine-phosphate synthase (240 aa).

4-amino-2-methyl-5-(diphosphooxymethyl)pyrimidine contacts are provided by residues 63 to 67 (QYREK) and Asn-94. Asp-95 and Asp-114 together coordinate Mg(2+). A 4-amino-2-methyl-5-(diphosphooxymethyl)pyrimidine-binding site is contributed by Thr-133. Residue 159–161 (TFT) coordinates 2-[(2R,5Z)-2-carboxy-4-methylthiazol-5(2H)-ylidene]ethyl phosphate. Lys-162 serves as a coordination point for 4-amino-2-methyl-5-(diphosphooxymethyl)pyrimidine. Residues Gly-190 and 210–211 (IS) each bind 2-[(2R,5Z)-2-carboxy-4-methylthiazol-5(2H)-ylidene]ethyl phosphate.

It belongs to the thiamine-phosphate synthase family. Mg(2+) is required as a cofactor.

It carries out the reaction 2-[(2R,5Z)-2-carboxy-4-methylthiazol-5(2H)-ylidene]ethyl phosphate + 4-amino-2-methyl-5-(diphosphooxymethyl)pyrimidine + 2 H(+) = thiamine phosphate + CO2 + diphosphate. The catalysed reaction is 2-(2-carboxy-4-methylthiazol-5-yl)ethyl phosphate + 4-amino-2-methyl-5-(diphosphooxymethyl)pyrimidine + 2 H(+) = thiamine phosphate + CO2 + diphosphate. It catalyses the reaction 4-methyl-5-(2-phosphooxyethyl)-thiazole + 4-amino-2-methyl-5-(diphosphooxymethyl)pyrimidine + H(+) = thiamine phosphate + diphosphate. The protein operates within cofactor biosynthesis; thiamine diphosphate biosynthesis; thiamine phosphate from 4-amino-2-methyl-5-diphosphomethylpyrimidine and 4-methyl-5-(2-phosphoethyl)-thiazole: step 1/1. Condenses 4-methyl-5-(beta-hydroxyethyl)thiazole monophosphate (THZ-P) and 2-methyl-4-amino-5-hydroxymethyl pyrimidine pyrophosphate (HMP-PP) to form thiamine monophosphate (TMP). The sequence is that of Thiamine-phosphate synthase from Methanosarcina mazei (strain ATCC BAA-159 / DSM 3647 / Goe1 / Go1 / JCM 11833 / OCM 88) (Methanosarcina frisia).